The primary structure comprises 384 residues: MAKHLFTSESVSEGHPDKIADQISDAVLDAILEQDPKARVACETYVKTGMVMVGGEVTTSAWVDIEEITRNTVREIGYTHSDMGFDADSCAILNVIGKQSPDINQGVDRADPKEQGAGDQGLMFGYANNETDVFMPAPITYSHMLVKRQSEVRKDKTLPWLRPDAKSQVTFAYNSDGSIAGIDAVVLSTQHSEDVTQADLIEGVMESIIKPVLPAKWLSKETKYFINPTGRFVIGGPVGDCGLTGRKIIVDTYGGMARHGGGAFSGKDPSKVDRSAAYAARYVAKNIVAAGLADRCELQVSYAIGVAEPTSISIETFGTAKVAEELLIDLVRRHFDLRPYGLTEMLNLARPIYKSTAAYGHFGREEFPWEATDKVEALRADAGL.

His15 contacts ATP. Residue Asp17 participates in Mg(2+) binding. Position 43 (Glu43) interacts with K(+). 2 residues coordinate L-methionine: Glu56 and Gln99. The flexible loop stretch occupies residues 99 to 109 (QSPDINQGVDR). Residues 164 to 166 (DAK), 231 to 232 (RF), Asp240, 246 to 247 (RK), Ala263, and Lys267 contribute to the ATP site. Asp240 lines the L-methionine pocket. Residue Lys271 coordinates L-methionine.

The protein belongs to the AdoMet synthase family. As to quaternary structure, homotetramer; dimer of dimers. The cofactor is Mg(2+). It depends on K(+) as a cofactor.

Its subcellular location is the cytoplasm. It catalyses the reaction L-methionine + ATP + H2O = S-adenosyl-L-methionine + phosphate + diphosphate. It participates in amino-acid biosynthesis; S-adenosyl-L-methionine biosynthesis; S-adenosyl-L-methionine from L-methionine: step 1/1. In terms of biological role, catalyzes the formation of S-adenosylmethionine (AdoMet) from methionine and ATP. The overall synthetic reaction is composed of two sequential steps, AdoMet formation and the subsequent tripolyphosphate hydrolysis which occurs prior to release of AdoMet from the enzyme. This is S-adenosylmethionine synthase from Shewanella woodyi (strain ATCC 51908 / MS32).